We begin with the raw amino-acid sequence, 99 residues long: Phosphoribosyl-ATP pyrophosphatase (99 aa).

This sequence belongs to the PRA-PH family.

Its subcellular location is the cytoplasm. It catalyses the reaction 1-(5-phospho-beta-D-ribosyl)-ATP + H2O = 1-(5-phospho-beta-D-ribosyl)-5'-AMP + diphosphate + H(+). It participates in amino-acid biosynthesis; L-histidine biosynthesis; L-histidine from 5-phospho-alpha-D-ribose 1-diphosphate: step 2/9. The sequence is that of Phosphoribosyl-ATP pyrophosphatase from Methanococcoides burtonii (strain DSM 6242 / NBRC 107633 / OCM 468 / ACE-M).